A 437-amino-acid polypeptide reads, in one-letter code: GTPase Obg (437 aa).

In terms of domain architecture, Obg spans 2–160 (SMFLDTAKIS…RELQLELKIL (159 aa)). In terms of domain architecture, OBG-type G spans 161–338 (ADVGLVGFPS…LMDATAELLA (178 aa)). GTP contacts are provided by residues 167–174 (GFPSVGKS), 192–196 (FTTIV), 214–217 (DLPG), 284–287 (NKMD), and 319–321 (SSL). Mg(2+)-binding residues include serine 174 and threonine 194. Residues 359–437 (GFNEDERPFE…IGNFEFEFVD (79 aa)) enclose the OCT domain.

This sequence belongs to the TRAFAC class OBG-HflX-like GTPase superfamily. OBG GTPase family. In terms of assembly, monomer. It depends on Mg(2+) as a cofactor.

The protein resides in the cytoplasm. Its function is as follows. An essential GTPase which binds GTP, GDP and possibly (p)ppGpp with moderate affinity, with high nucleotide exchange rates and a fairly low GTP hydrolysis rate. Plays a role in control of the cell cycle, stress response, ribosome biogenesis and in those bacteria that undergo differentiation, in morphogenesis control. This Streptococcus agalactiae serotype Ia (strain ATCC 27591 / A909 / CDC SS700) protein is GTPase Obg.